Here is a 352-residue protein sequence, read N- to C-terminus: Maleylacetate reductase (352 aa).

Belongs to the iron-containing alcohol dehydrogenase family.

It carries out the reaction 3-oxoadipate + NAD(+) = maleylacetate + NADH + H(+). It catalyses the reaction 3-oxoadipate + NADP(+) = maleylacetate + NADPH + H(+). It participates in aromatic compound metabolism; 3-chlorocatechol degradation. This Pseudomonas knackmussii (strain DSM 6978 / CCUG 54928 / LMG 23759 / B13) protein is Maleylacetate reductase (clcE).